The sequence spans 80 residues: Tail fiber assembly helper protein (80 aa).

In terms of assembly, homotrimer. Homohexamer.

Functionally, chaperone essential for folding and oligomerization of both long and short tail fibers. Required for the assembly of gp34, gp36 and gp37 (components of the long tail fiber) and p12 (the subunit of the short tail fiber). Together with gp38, participates in the formation of the distal part of the long fibers. The chain is Tail fiber assembly helper protein (57) from Escherichia coli (Bacteriophage T4).